Reading from the N-terminus, the 325-residue chain is Probable cell division protein WhiA (325 aa).

The H-T-H motif DNA-binding region spans 273–306; the sequence is SLEELGRLADPPMTKDAVAGRIRRLLSMADRKAK.

It belongs to the WhiA family.

In terms of biological role, involved in cell division and chromosome segregation. The sequence is that of Probable cell division protein WhiA from Mycobacterium bovis (strain BCG / Tokyo 172 / ATCC 35737 / TMC 1019).